A 580-amino-acid polypeptide reads, in one-letter code: 2-isopropylmalate synthase (580 aa).

The segment covering 1–11 (MSATAFPTLST) has biased composition (polar residues). A disordered region spans residues 1-37 (MSATAFPTLSTPAGEIPATAPAWNRQRRSQMPSHRYR). The Pyruvate carboxyltransferase domain occupies 61–334 (PLWVPVDLRD…DPMIDFSDID (274 aa)). Positions 70, 273, 275, and 309 each coordinate Mg(2+). A regulatory domain region spans residues 476-580 (EGEADAPQAD…ARAVAEVRPG (105 aa)).

The protein belongs to the alpha-IPM synthase/homocitrate synthase family. LeuA type 2 subfamily. As to quaternary structure, homodimer. It depends on Mg(2+) as a cofactor.

It is found in the cytoplasm. It carries out the reaction 3-methyl-2-oxobutanoate + acetyl-CoA + H2O = (2S)-2-isopropylmalate + CoA + H(+). The protein operates within amino-acid biosynthesis; L-leucine biosynthesis; L-leucine from 3-methyl-2-oxobutanoate: step 1/4. In terms of biological role, catalyzes the condensation of the acetyl group of acetyl-CoA with 3-methyl-2-oxobutanoate (2-ketoisovalerate) to form 3-carboxy-3-hydroxy-4-methylpentanoate (2-isopropylmalate). The sequence is that of 2-isopropylmalate synthase from Nocardia farcinica (strain IFM 10152).